Consider the following 338-residue polypeptide: Malate dehydrogenase, mitochondrial (338 aa).

The N-terminal 24 residues, 1-24, are a transit peptide targeting the mitochondrion; sequence MLSALARPAGAALRRSFSTSAQNN. NAD(+) is bound by residues 31-37 and Asp-57; that span reads GASGGIG. The O-linked (GlcNAc) serine glycan is linked to Ser-33. 2 positions are modified to N6-acetyllysine; alternate: Lys-78 and Lys-91. 2 positions are modified to N6-succinyllysine; alternate: Lys-78 and Lys-91. The substrate site is built by Arg-104 and Arg-110. NAD(+)-binding positions include Asn-117 and 140-142; that span reads ISN. Asn-142 provides a ligand contact to substrate. Lys-165 is modified (N6-acetyllysine). Arg-176 contacts substrate. Lys-185 is modified (N6-acetyllysine; alternate). Residue Lys-185 is modified to N6-succinyllysine; alternate. His-200 serves as the catalytic Proton acceptor. Position 203 is an N6-succinyllysine (Lys-203). N6-acetyllysine; alternate is present on residues Lys-215 and Lys-239. An N6-succinyllysine; alternate mark is found at Lys-215 and Lys-239. Lys-239 carries the post-translational modification N6-malonyllysine; alternate. Ser-246 carries the phosphoserine modification. An NAD(+)-binding site is contributed by Met-251. N6-succinyllysine is present on Lys-269. Residues Lys-296, Lys-301, Lys-307, Lys-314, and Lys-324 each carry the N6-acetyllysine; alternate modification. Residues Lys-296, Lys-301, Lys-307, Lys-314, and Lys-324 each carry the N6-succinyllysine; alternate modification. An N6-malonyllysine; alternate modification is found at Lys-307. Ser-326 bears the Phosphoserine mark. N6-acetyllysine; alternate is present on residues Lys-328, Lys-329, and Lys-335. Position 328 is an N6-succinyllysine; alternate (Lys-328). Lys-329 is subject to N6-malonyllysine; alternate. An N6-succinyllysine; alternate modification is found at Lys-335.

Belongs to the LDH/MDH superfamily. MDH type 1 family. As to quaternary structure, homodimer. Acetylation is enhanced after treatment either with trichostin A (TCA) or with nicotinamide (NAM) with the appearance of tri- and tetraacetylations. Glucose also increases acetylation.

It is found in the mitochondrion matrix. It carries out the reaction (S)-malate + NAD(+) = oxaloacetate + NADH + H(+). Enzyme activity is enhanced by acetylation. The sequence is that of Malate dehydrogenase, mitochondrial (MDH2) from Bos taurus (Bovine).